The following is a 460-amino-acid chain: Cysteine--tRNA ligase (460 aa).

Zn(2+) is bound at residue cysteine 27. A 'HIGH' region motif is present at residues 29–39 (PTVYDLIHVGN). 3 residues coordinate Zn(2+): cysteine 207, histidine 232, and glutamate 236. The short motif at 264-268 (KMSKS) is the 'KMSKS' region element. Lysine 267 lines the ATP pocket.

It belongs to the class-I aminoacyl-tRNA synthetase family. As to quaternary structure, monomer. Zn(2+) is required as a cofactor.

Its subcellular location is the cytoplasm. The catalysed reaction is tRNA(Cys) + L-cysteine + ATP = L-cysteinyl-tRNA(Cys) + AMP + diphosphate. The polypeptide is Cysteine--tRNA ligase (cysS) (Thermotoga maritima (strain ATCC 43589 / DSM 3109 / JCM 10099 / NBRC 100826 / MSB8)).